Here is a 367-residue protein sequence, read N- to C-terminus: Protein RIC-3 (367 aa).

A signal peptide spans 1–31 (MAYSTVQRVALASGLVLAVSLLLPKAFLSRG). The segment at 30-67 (RGKRPEPPPGPEGKLDRFPPMMHHHSAPSDGQTPGARF) is disordered. Topologically, residues 32–95 (KRPEPPPGPE…AGGGGSGRGL (64 aa)) are lumenal. Residues 96-116 (MGQIIPIYGFGIFLYILYILF) form a helical membrane-spanning segment. Residues 117–367 (KLSKGKTAED…LRKRNPQGFE (251 aa)) are Cytoplasmic-facing. Positions 138–169 (HRKITNFELVQLQEKLKETEEAMEKLINRVGP) form a coiled coil. Lys-201 bears the N6-acetyllysine; alternate mark. Lys-201 participates in a covalent cross-link: Glycyl lysine isopeptide (Lys-Gly) (interchain with G-Cter in ubiquitin); alternate. Disordered regions lie at residues 262–301 (QMGEIEEEGSERLSWDHLPTDPGAQKDNSVAPCDPKPESC) and 322–367 (ADGY…QGFE). Residues 271–280 (SERLSWDHLP) show a composition bias toward basic and acidic residues. A compositionally biased stretch (basic residues) spans 358 to 367 (LRKRNPQGFE).

Belongs to the ric-3 family. As to quaternary structure, monomer and homodimer. Interacts with CHRNA7, CHRNA3, CHRNA4, CHRNB2, CHRNB4 and HTR3A. Expressed in brain, with highest levels in hippocampus, cerebellum and superior colliculus.

It localises to the endoplasmic reticulum membrane. Molecular chaperone which promotes the proper subunit assembly and surface trafficking of alpha-7 (CHRNA7) nicotinic acetylcholine receptor. Promotes the proper subunit assembly and cell surface expression of alpha-8 (CHRNA8) nicotinic acetylcholine receptor. May also promote functional expression of homomeric serotoninergic 5-HT3 receptors, and of heteromeric acetylcholine receptors alpha-3/beta-2, alpha-3/beta-4, alpha-4/beta-2 and alpha-4/beta-4. The chain is Protein RIC-3 (Ric3) from Mus musculus (Mouse).